The sequence spans 972 residues: SWI/SNF-related matrix-associated actin-dependent regulator of chromatin subfamily A containing DEAD/H box 1A (972 aa).

Disordered stretches follow at residues 15 to 76, 125 to 177, and 217 to 333; these read NAVG…SDLQ, DEDS…EKQE, and SSTD…EDSI. 2 stretches are compositionally biased toward basic and acidic residues: residues 22 to 42 and 63 to 72; these read KSPD…RKAD and EVVRMGKDSA. A CUE 1 domain is found at 82-127; it reads DMEDKIIKLLEIFPQKSKKDLLEVIENTSTLDGAVAHCLMIYGDED. Basic and acidic residues predominate over residues 128–138; it reads SGGRKDKGGRS. Residues 156–169 are compositionally biased toward acidic residues; the sequence is SESEDEDSEDEESE. Residues 175–218 form the CUE 2 domain; that stretch reads KQEALLKKLKRKLPDIEKEVLRDILKEHDWDYENALGSLLVFSS. Basic and acidic residues predominate over residues 237–246; that stretch reads HSKEKTDKIT. Polar residues predominate over residues 247-263; sequence QRPSGSSSLSRWLTAAS. The segment covering 279–290 has biased composition (low complexity); it reads KSALSKSTSKNS. The span at 307–332 shows a compositional bias: acidic residues; that stretch reads ASEDEDEIDSDVDSMSDDQDSEDEDS. Residues 460 to 628 enclose the Helicase ATP-binding domain; it reads ILLHQHKLSG…MSLLNFIMPS (169 aa). 473–480 is an ATP binding site; sequence DEMGLGKT. A DEGH box motif is present at residues 579–582; that stretch reads DEGH. In terms of domain architecture, Helicase C-terminal spans 805 to 966; it reads LLTKTLAKLK…AITEQMAELL (162 aa).

It belongs to the SNF2/RAD54 helicase family.

It localises to the nucleus. The protein localises to the chromosome. It catalyses the reaction ATP + H2O = ADP + phosphate + H(+). Functionally, DNA helicase that possesses intrinsic ATP-dependent nucleosome-remodeling activity and is both required for DNA repair and heterochromatin organization. Promotes DNA end resection of double-strand breaks (DSBs) following DNA damage: probably acts by weakening histone DNA interactions in nucleosomes flanking DSBs. Required for the restoration of heterochromatin organization after replication. This is SWI/SNF-related matrix-associated actin-dependent regulator of chromatin subfamily A containing DEAD/H box 1A (smarcad1a) from Danio rerio (Zebrafish).